The chain runs to 105 residues: MRIVIYSMLVLLIAIQYPLWLGKGGWLKVYEMEKQVELQEAKNSLLALRNAKLEGDVKDLKDGTRAIEERARVEHGLIKEGEFFVQILPADQSSADTAKASTVKQ.

At methionine 1 to isoleucine 3 the chain is on the cytoplasmic side. A helical membrane pass occupies residues valine 4 to leucine 21. Topologically, residues glycine 22–glutamine 105 are periplasmic. The stretch at methionine 32–leucine 60 forms a coiled coil.

Belongs to the FtsB family. Part of a complex composed of FtsB, FtsL and FtsQ.

It localises to the cell inner membrane. Essential cell division protein. May link together the upstream cell division proteins, which are predominantly cytoplasmic, with the downstream cell division proteins, which are predominantly periplasmic. This chain is Cell division protein FtsB, found in Polynucleobacter asymbioticus (strain DSM 18221 / CIP 109841 / QLW-P1DMWA-1) (Polynucleobacter necessarius subsp. asymbioticus).